The sequence spans 708 residues: Capsid scaffolding protein (708 aa).

Catalysis depends on charge relay system residues histidine 63, serine 132, and histidine 157. Disordered regions lie at residues 270-339 (SAER…MSHP), 455-565 (HPSY…QQQR), and 593-620 (ALPS…GGGE). Residues 284–293 (PAAGARVPSS) show a composition bias toward low complexity. Over residues 294–311 (SPSPPVEPPSPVQPPALP) the composition is skewed to pro residues. Residues 326–339 (SPSEPAEAASMSHP) show a composition bias toward low complexity. Positions 333–352 (AASMSHPLSAAVPAATAPPG) are interaction with pAP. Residues 498–513 (KQHRHGGSGGHNKRRK) are compositionally biased toward basic residues. 2 short sequence motifs (nuclear localization signal) span residues 510–515 (KRRKET) and 537–543 (RARKRLK). Residues 593-615 (ALPSAASSSPTTTTVCTPTSELT) are compositionally biased toward low complexity. An interaction with major capsid protein region spans residues 688 to 708 (PPKDMVDLNRRIFVAALNKLE).

This sequence belongs to the herpesviridae capsid scaffolding protein family. Homomultimer. Interacts with major capsid protein. As to quaternary structure, exists in a monomer-dimer equilibrium with the dimer being the active species. In terms of processing, capsid scaffolding protein is cleaved by assemblin after formation of the spherical procapsid. As a result, the capsid obtains its mature, icosahedral shape. Cleavages occur at two or more sites: release (R-site) and maturation (M-site).

The protein localises to the host cytoplasm. Its subcellular location is the host nucleus. It carries out the reaction Cleaves -Ala-|-Ser- and -Ala-|-Ala- bonds in the scaffold protein.. Acts as a scaffold protein by binding major capsid protein in the cytoplasm, inducing the nuclear localization of both proteins. Multimerizes in the nucleus such as major capsid protein forms the icosahedral T=16 capsid. Autocatalytic cleavage releases the assembly protein, and subsequently abolishes interaction with major capsid protein. Cleavages products are evicted from the capsid before or during DNA packaging. In terms of biological role, protease that plays an essential role in virion assembly within the nucleus. Catalyzes the cleavage of the assembly protein after formation of the spherical procapsid. By that cleavage, the capsid matures and gains its icosahedral shape. The cleavage sites seem to include -Ala-Ser-, -Ala-Ala-, as well as Ala-Thr bonds. Assemblin and cleavages products are evicted from the capsid before or during DNA packaging. Functionally, plays a major role in capsid assembly. Acts as a scaffold protein by binding major capsid protein. Multimerizes in the nucleus such as major capsid protein forms the icosahedral T=16 capsid. Cleaved by assemblin after capsid completion. The cleavages products are evicted from the capsid before or during DNA packaging. This is Capsid scaffolding protein (UL80) from Homo sapiens (Human).